The sequence spans 281 residues: ATP synthase gamma chain (281 aa).

Belongs to the ATPase gamma chain family. As to quaternary structure, F-type ATPases have 2 components, CF(1) - the catalytic core - and CF(0) - the membrane proton channel. CF(1) has five subunits: alpha(3), beta(3), gamma(1), delta(1), epsilon(1). CF(0) has three main subunits: a, b and c.

It is found in the cell inner membrane. In terms of biological role, produces ATP from ADP in the presence of a proton gradient across the membrane. The gamma chain is believed to be important in regulating ATPase activity and the flow of protons through the CF(0) complex. This chain is ATP synthase gamma chain, found in Ehrlichia chaffeensis (strain ATCC CRL-10679 / Arkansas).